We begin with the raw amino-acid sequence, 174 residues long: Probable calcium-binding protein CML20 (174 aa).

A lipid anchor (N-myristoyl glycine) is attached at Gly-2. Positions 14–35 (LRRSRSRSPPPAVLDPSQSPLS) are disordered. 4 EF-hand domains span residues 39 to 74 (EAEPELIRVFRCFDTDGDGLISAAEMREFYGCSVDE), 75 to 100 (AEEMVAAADRDGDGFVSIEELRAVME), 102 to 137 (GGLDALRAAFDEYDEDGNGVITAEELRRALRRLNLD), and 141 to 174 (LTAEQCAEIVAAVDSDGDGVISFDEFKAMMSKQA). Ca(2+)-binding residues include Asp-52, Asp-54, Asp-56, Glu-63, Asp-83, Asp-85, Asp-87, Glu-94, Asp-115, Asp-117, Asn-119, Glu-126, Asp-154, Asp-156, Asp-158, and Glu-165.

Potential calcium sensor. This chain is Probable calcium-binding protein CML20 (CML20), found in Oryza sativa subsp. japonica (Rice).